Reading from the N-terminus, the 473-residue chain is NAD-dependent protein deacetylase SRT1 (473 aa).

Residues 27 to 267 (SHLLQCKIEE…AGVMESLNMK (241 aa)) form the Deacetylase sirtuin-type domain. Residues 52–71 (GAGI…KGIW) and 114–117 (QNVD) contribute to the NAD(+) site. The Proton acceptor role is filled by H134. Zn(2+) contacts are provided by C142, C145, C167, and C172. Residues 209–211 (GTS), 235–237 (NLQ), and V253 contribute to the NAD(+) site. The disordered stretch occupies residues 447 to 473 (LEGSGTSRKRSRTGKRKSKALAEETKA). Residues 453 to 465 (SRKRSRTGKRKSK) are compositionally biased toward basic residues.

Belongs to the sirtuin family. Class IV subfamily. As to quaternary structure, binds to the promoter region of genes influenced by ethylene. Interacts with ENAP1; this interaction is enhanced in the presence of ethylene. It depends on Zn(2+) as a cofactor.

It is found in the nucleus. The enzyme catalyses N(6)-acetyl-L-lysyl-[protein] + NAD(+) + H2O = 2''-O-acetyl-ADP-D-ribose + nicotinamide + L-lysyl-[protein]. NAD-dependent protein deacetylase. Has deacetylase activity towards H3K9Ac. May have a function in the safeguard against genome instability and DNA damage to ensure plant cell growth. Involved in responses to ethylene leading to the transcriptional repression of some ethylene-responsive genes via the regulation of histone acetylation H3K9Ac. This Arabidopsis thaliana (Mouse-ear cress) protein is NAD-dependent protein deacetylase SRT1.